Here is a 153-residue protein sequence, read N- to C-terminus: Probable Brix domain-containing ribosomal biogenesis protein (153 aa).

Residues 1–153 (MQVLTTSRKP…RILKISRSSR (153 aa)) form the Brix domain.

Probably involved in the biogenesis of the ribosome. The polypeptide is Probable Brix domain-containing ribosomal biogenesis protein (Archaeoglobus fulgidus (strain ATCC 49558 / DSM 4304 / JCM 9628 / NBRC 100126 / VC-16)).